A 323-amino-acid chain; its full sequence is tRNA dimethylallyltransferase (323 aa).

13-20 (GPTASGKT) provides a ligand contact to ATP. 15 to 20 (TASGKT) is a binding site for substrate. Interaction with substrate tRNA stretches follow at residues 42–45 (DSAL), 166–170 (QRIQR), 251–256 (RCVGYR), and 284–291 (KRQITWLR).

It belongs to the IPP transferase family. In terms of assembly, monomer. Mg(2+) is required as a cofactor.

The catalysed reaction is adenosine(37) in tRNA + dimethylallyl diphosphate = N(6)-dimethylallyladenosine(37) in tRNA + diphosphate. Catalyzes the transfer of a dimethylallyl group onto the adenine at position 37 in tRNAs that read codons beginning with uridine, leading to the formation of N6-(dimethylallyl)adenosine (i(6)A). The sequence is that of tRNA dimethylallyltransferase from Acidovorax ebreus (strain TPSY) (Diaphorobacter sp. (strain TPSY)).